Consider the following 121-residue polypeptide: Large ribosomal subunit protein uL14 (121 aa).

Belongs to the universal ribosomal protein uL14 family. In terms of assembly, part of the 50S ribosomal subunit. Forms a cluster with proteins L3 and L19. In the 70S ribosome, L14 and L19 interact and together make contacts with the 16S rRNA in bridges B5 and B8.

Its function is as follows. Binds to 23S rRNA. Forms part of two intersubunit bridges in the 70S ribosome. This Prochlorococcus marinus (strain MIT 9515) protein is Large ribosomal subunit protein uL14.